We begin with the raw amino-acid sequence, 576 residues long: Cyclic nucleotide-binding domain-containing protein 2 (576 aa).

Residue 116-239 coordinates a nucleoside 3',5'-cyclic phosphate; it reads SYRNYAEPLQ…DAQYRFEFFR (124 aa).

The protein localises to the cytoplasm. It localises to the cytosol. Functionally, essential for male fertility. Plays an important role in spermatogenesis and regulates sperm motility by controlling the development of the flagellar bending of sperm. This Homo sapiens (Human) protein is Cyclic nucleotide-binding domain-containing protein 2 (CNBD2).